A 599-amino-acid chain; its full sequence is MNQRIPQETIEEIRRSVDILDVIGEYVQLKKQGRNYIGLCPFHGENTPSFSVSPDKQLYHCFGCGAGGNAFTFLEQIEGFTFVEAVETLAKRANVVLPERVSPSVKQNRDEELLISIQEFAAKFFHHVLMLTEEGKAGRTYLERRGFTKEQIEHFQIGFAPPHWDALTNVLAKRDVDLKKAGESGLLVERESDGKRYDRFRNRVIFPIRNGKGKIVAFGGRTLGDDKPKYLNSPESPIFQKGKLLYGFYQARPAIRKENEAVLFEGYVDVIAAWKAGVTNGVATLGTSLTEEQARMIRRNAETVIICNDGDAAGAEATFRSADLLQQEGCHVKVAMIPDGLDPDDYIQKYGAERFKKDVIGESLTLMKFKMKYFRMGRNLQNEGERILYIEEIIKEIAKLSKAVERDHYLRQLAEEFSLSLDALKQEQYRIYREMKRQNQVSQGKTNTVRQKKHDFEQKRLLPAYQNAERILLAHMMRNVSVAETVQERLGGRFNVDHYQAIVAHLFAYYAEGFEPDPCTFIQRLEDQELIRVATELAMLEINEEINDQELNDYIEKIEMYPKWLELQQIESALKKETDPVLYATRKQELINMKKQLKL.

The CHC2-type zinc finger occupies 40-64 (CPFHGENTPSFSVSPDKQLYHCFGC). The region spanning 259 to 342 (NEAVLFEGYV…KVAMIPDGLD (84 aa)) is the Toprim domain. The Mg(2+) site is built by Glu265, Asp309, and Asp311.

Belongs to the DnaG primase family. As to quaternary structure, monomer. Interacts with DnaB. Zn(2+) is required as a cofactor. It depends on Mg(2+) as a cofactor.

It catalyses the reaction ssDNA + n NTP = ssDNA/pppN(pN)n-1 hybrid + (n-1) diphosphate.. Its function is as follows. RNA polymerase that catalyzes the synthesis of short RNA molecules used as primers for DNA polymerase during DNA replication. This chain is DNA primase, found in Halalkalibacterium halodurans (strain ATCC BAA-125 / DSM 18197 / FERM 7344 / JCM 9153 / C-125) (Bacillus halodurans).